Consider the following 206-residue polypeptide: Ribosomal RNA large subunit methyltransferase E (206 aa).

Residues glycine 60, tryptophan 62, aspartate 80, aspartate 96, and aspartate 121 each coordinate S-adenosyl-L-methionine. Lysine 161 (proton acceptor) is an active-site residue.

This sequence belongs to the class I-like SAM-binding methyltransferase superfamily. RNA methyltransferase RlmE family.

It is found in the cytoplasm. It carries out the reaction uridine(2552) in 23S rRNA + S-adenosyl-L-methionine = 2'-O-methyluridine(2552) in 23S rRNA + S-adenosyl-L-homocysteine + H(+). Specifically methylates the uridine in position 2552 of 23S rRNA at the 2'-O position of the ribose in the fully assembled 50S ribosomal subunit. This Francisella tularensis subsp. novicida (strain U112) protein is Ribosomal RNA large subunit methyltransferase E.